The sequence spans 104 residues: Large ribosomal subunit protein uL23 (104 aa).

The protein belongs to the universal ribosomal protein uL23 family. In terms of assembly, part of the 50S ribosomal subunit. Contacts protein L29, and trigger factor when it is bound to the ribosome.

Functionally, one of the early assembly proteins it binds 23S rRNA. One of the proteins that surrounds the polypeptide exit tunnel on the outside of the ribosome. Forms the main docking site for trigger factor binding to the ribosome. The protein is Large ribosomal subunit protein uL23 of Trichormus variabilis (strain ATCC 29413 / PCC 7937) (Anabaena variabilis).